Here is a 499-residue protein sequence, read N- to C-terminus: 2,3-bisphosphoglycerate-independent phosphoglycerate mutase (499 aa).

Residues aspartate 10 and serine 60 each contribute to the Mn(2+) site. Serine 60 acts as the Phosphoserine intermediate in catalysis. Substrate is bound by residues histidine 121, 151-152 (RD), arginine 182, arginine 188, 253-256 (RPDR), and lysine 326. Mn(2+) contacts are provided by aspartate 391, histidine 395, aspartate 434, histidine 435, and histidine 452.

Belongs to the BPG-independent phosphoglycerate mutase family. As to quaternary structure, monomer. Mn(2+) is required as a cofactor.

The catalysed reaction is (2R)-2-phosphoglycerate = (2R)-3-phosphoglycerate. The protein operates within carbohydrate degradation; glycolysis; pyruvate from D-glyceraldehyde 3-phosphate: step 3/5. Catalyzes the interconversion of 2-phosphoglycerate and 3-phosphoglycerate. The polypeptide is 2,3-bisphosphoglycerate-independent phosphoglycerate mutase (Metamycoplasma hominis (strain ATCC 23114 / DSM 25592 / NBRC 14850 / NCTC 10111 / PG21) (Mycoplasma hominis)).